The following is a 718-amino-acid chain: Manganese-exporting P-type ATPase (718 aa).

One can recognise an HMA domain in the interval 11-78 (GRMRVKVDWV…AIKGAAHVAA (68 aa)). A run of 6 helical transmembrane segments spans residues 87–105 (HSAEIRNTDVLRMVIGGVA), 128–146 (TVATGVTIFTGYPFLRGAL), 154–168 (AGTDALVSAATVASL), 177–191 (LTVLWLLNIGEYLQD), 327–351 (VGENFSRRFVPTSFIVSAIALLITG), and 357–375 (MTMLLIACPCAVGLSTPTA). Asp408 serves as the catalytic 4-aspartylphosphate intermediate. Mg(2+) contacts are provided by Asp408, Thr410, and Asp610. 2 helical membrane-spanning segments follow: residues 661–680 (AVDVIRQNYGMSIAVNAAGL) and 690–709 (PVLAAILHNASSVAVVANSS).

The protein belongs to the cation transport ATPase (P-type) (TC 3.A.3) family. Type IB subfamily.

The protein localises to the cell membrane. It catalyses the reaction Mn(2+)(in) + ATP + H2O = Mn(2+)(out) + ADP + phosphate + H(+). In terms of biological role, high affinity, slow turnover Mn(2+) transporting ATPase. The protein is Manganese-exporting P-type ATPase (ctpC) of Mycobacterium bovis (strain ATCC BAA-935 / AF2122/97).